The following is a 273-amino-acid chain: 3-methyl-2-oxobutanoate hydroxymethyltransferase (273 aa).

Residues Asp53 and Asp92 each coordinate Mg(2+). 3-methyl-2-oxobutanoate contacts are provided by residues 53–54 (DS), Asp92, and Lys122. Glu124 is a binding site for Mg(2+). Glu191 (proton acceptor) is an active-site residue.

It belongs to the PanB family. As to quaternary structure, homodecamer; pentamer of dimers. Requires Mg(2+) as cofactor.

It is found in the cytoplasm. The catalysed reaction is 3-methyl-2-oxobutanoate + (6R)-5,10-methylene-5,6,7,8-tetrahydrofolate + H2O = 2-dehydropantoate + (6S)-5,6,7,8-tetrahydrofolate. It functions in the pathway cofactor biosynthesis; (R)-pantothenate biosynthesis; (R)-pantoate from 3-methyl-2-oxobutanoate: step 1/2. Functionally, catalyzes the reversible reaction in which hydroxymethyl group from 5,10-methylenetetrahydrofolate is transferred onto alpha-ketoisovalerate to form ketopantoate. This Bacteroides thetaiotaomicron (strain ATCC 29148 / DSM 2079 / JCM 5827 / CCUG 10774 / NCTC 10582 / VPI-5482 / E50) protein is 3-methyl-2-oxobutanoate hydroxymethyltransferase.